The following is a 307-amino-acid chain: F-box protein PP2-B7 (307 aa).

The F-box domain occupies 37–83 (PLSLGDLPEECISLIISFTSPRDACVFALVSKTFESAVQSDIVWEKF).

This Arabidopsis thaliana (Mouse-ear cress) protein is F-box protein PP2-B7 (PP2B7).